Here is a 202-residue protein sequence, read N- to C-terminus: MSRYRGPRVRIIRRLGALPGLTNKTPQLKSSSINQSTSNKKISQYRIRLEEKQKLRFHYGITERQLLNYVRIARKAKGSTGEVLLQLLEMRLDNIIFRLGMSPTIPGARQLVNHRHILVNGYIVDIPSYRCKPQDFITIKNQRKSETIISKNIEFYQKYKIPNHLIYNSLEKKGLVNQILDHESIGLKINELLVVEYYSRQA.

The 64-residue stretch at 90-153 (MRLDNIIFRL…KSETIISKNI (64 aa)) folds into the S4 RNA-binding domain.

This sequence belongs to the universal ribosomal protein uS4 family. As to quaternary structure, part of the 30S ribosomal subunit. Contacts protein S5. The interaction surface between S4 and S5 is involved in control of translational fidelity.

Its subcellular location is the plastid. The protein localises to the chloroplast. Its function is as follows. One of the primary rRNA binding proteins, it binds directly to 16S rRNA where it nucleates assembly of the body of the 30S subunit. With S5 and S12 plays an important role in translational accuracy. The polypeptide is Small ribosomal subunit protein uS4c (rps4) (Catharomnion ciliatum (Moss)).